We begin with the raw amino-acid sequence, 232 residues long: Large ribosomal subunit protein uL1 (232 aa).

The protein belongs to the universal ribosomal protein uL1 family. As to quaternary structure, part of the 50S ribosomal subunit.

Functionally, binds directly to 23S rRNA. The L1 stalk is quite mobile in the ribosome, and is involved in E site tRNA release. Its function is as follows. Protein L1 is also a translational repressor protein, it controls the translation of the L11 operon by binding to its mRNA. This chain is Large ribosomal subunit protein uL1, found in Levilactobacillus brevis (strain ATCC 367 / BCRC 12310 / CIP 105137 / JCM 1170 / LMG 11437 / NCIMB 947 / NCTC 947) (Lactobacillus brevis).